The sequence spans 73 residues: Long neurotoxin 2 (73 aa).

5 disulfide bridges follow: Cys3/Cys21, Cys14/Cys42, Cys27/Cys31, Cys46/Cys57, and Cys58/Cys63.

The protein belongs to the three-finger toxin family. Long-chain subfamily. Type II alpha-neurotoxin sub-subfamily. In terms of tissue distribution, expressed by the venom gland.

It is found in the secreted. Functionally, binds with high affinity to muscular (alpha-1/CHRNA1) and neuronal (alpha-7/CHRNA7) nicotinic acetylcholine receptor (nAChR) and inhibits acetylcholine from binding to the receptor, thereby impairing neuromuscular and neuronal transmission. This Ophiophagus hannah (King cobra) protein is Long neurotoxin 2.